A 114-amino-acid polypeptide reads, in one-letter code: Large ribosomal subunit protein uL22 (114 aa).

Belongs to the universal ribosomal protein uL22 family. Part of the 50S ribosomal subunit.

In terms of biological role, this protein binds specifically to 23S rRNA; its binding is stimulated by other ribosomal proteins, e.g. L4, L17, and L20. It is important during the early stages of 50S assembly. It makes multiple contacts with different domains of the 23S rRNA in the assembled 50S subunit and ribosome. Its function is as follows. The globular domain of the protein is located near the polypeptide exit tunnel on the outside of the subunit, while an extended beta-hairpin is found that lines the wall of the exit tunnel in the center of the 70S ribosome. The protein is Large ribosomal subunit protein uL22 of Streptococcus gordonii (strain Challis / ATCC 35105 / BCRC 15272 / CH1 / DL1 / V288).